Here is a 149-residue protein sequence, read N- to C-terminus: SsrA-binding protein (149 aa).

It belongs to the SmpB family.

It is found in the cytoplasm. Its function is as follows. Required for rescue of stalled ribosomes mediated by trans-translation. Binds to transfer-messenger RNA (tmRNA), required for stable association of tmRNA with ribosomes. tmRNA and SmpB together mimic tRNA shape, replacing the anticodon stem-loop with SmpB. tmRNA is encoded by the ssrA gene; the 2 termini fold to resemble tRNA(Ala) and it encodes a 'tag peptide', a short internal open reading frame. During trans-translation Ala-aminoacylated tmRNA acts like a tRNA, entering the A-site of stalled ribosomes, displacing the stalled mRNA. The ribosome then switches to translate the ORF on the tmRNA; the nascent peptide is terminated with the 'tag peptide' encoded by the tmRNA and targeted for degradation. The ribosome is freed to recommence translation, which seems to be the essential function of trans-translation. This is SsrA-binding protein from Anaplasma marginale (strain St. Maries).